Consider the following 228-residue polypeptide: UPF0173 metal-dependent hydrolase RBAM_026340 (228 aa).

It belongs to the UPF0173 family.

The sequence is that of UPF0173 metal-dependent hydrolase RBAM_026340 from Bacillus velezensis (strain DSM 23117 / BGSC 10A6 / LMG 26770 / FZB42) (Bacillus amyloliquefaciens subsp. plantarum).